We begin with the raw amino-acid sequence, 201 residues long: Peptidyl-tRNA hydrolase (201 aa).

Y17 is a binding site for tRNA. H22 serves as the catalytic Proton acceptor. The tRNA site is built by F76, N78, and N124.

It belongs to the PTH family. In terms of assembly, monomer.

It is found in the cytoplasm. It carries out the reaction an N-acyl-L-alpha-aminoacyl-tRNA + H2O = an N-acyl-L-amino acid + a tRNA + H(+). In terms of biological role, hydrolyzes ribosome-free peptidyl-tRNAs (with 1 or more amino acids incorporated), which drop off the ribosome during protein synthesis, or as a result of ribosome stalling. Functionally, catalyzes the release of premature peptidyl moieties from peptidyl-tRNA molecules trapped in stalled 50S ribosomal subunits, and thus maintains levels of free tRNAs and 50S ribosomes. The sequence is that of Peptidyl-tRNA hydrolase from Oleidesulfovibrio alaskensis (strain ATCC BAA-1058 / DSM 17464 / G20) (Desulfovibrio alaskensis).